A 282-amino-acid polypeptide reads, in one-letter code: Fibrinogen-like protein A (282 aa).

Residues 1 to 24 (MFSFIMKAAILLILVGCISFCISS) form the signal peptide. Positions 61–281 (SHSPEYPRDC…FAEMKLRNRS (221 aa)) constitute a Fibrinogen C-terminal domain. Disulfide bonds link Cys70/Cys101 and Cys224/Cys240.

This Apostichopus parvimensis (Warty sea cucumber) protein is Fibrinogen-like protein A.